A 314-amino-acid polypeptide reads, in one-letter code: DNA-directed RNA polymerase subunit alpha (314 aa).

Positions 1–228 are alpha N-terminal domain (alpha-NTD); that stretch reads MIEFEKPNIH…DHLSIFVNLT (228 aa). The segment at 245–314 is alpha C-terminal domain (alpha-CTD); it reads KEKMLEMTIE…DLGLSLRKED (70 aa).

The protein belongs to the RNA polymerase alpha chain family. In terms of assembly, homodimer. The RNAP catalytic core consists of 2 alpha, 1 beta, 1 beta' and 1 omega subunit. When a sigma factor is associated with the core the holoenzyme is formed, which can initiate transcription.

It catalyses the reaction RNA(n) + a ribonucleoside 5'-triphosphate = RNA(n+1) + diphosphate. Functionally, DNA-dependent RNA polymerase catalyzes the transcription of DNA into RNA using the four ribonucleoside triphosphates as substrates. This is DNA-directed RNA polymerase subunit alpha from Lactiplantibacillus plantarum (strain ATCC BAA-793 / NCIMB 8826 / WCFS1) (Lactobacillus plantarum).